The sequence spans 149 residues: Hydroalkoxylation enzyme phnH (149 aa).

Positions 1-18 (MKFTYLVSLAAFAVTALG) are cleaved as a signal peptide. Asn-33 and Asn-127 each carry an N-linked (GlcNAc...) asparagine glycan.

Homotetramer.

The catalysed reaction is 2,4,7,9-tetrahydroxy-6-methyl-8-(2-methylbut-3-en-2-yl)-1-oxo-1H-phenalen-3-ol = (2'R)-atrovenetin. It functions in the pathway secondary metabolite biosynthesis. Hydroalkoxylation enzyme; part of the gene cluster that mediates the biosynthesis of phenalenones such as herqueinone, compounds that have been reported to treat tumors, bacterial infections and/or mycoses, and rheumatic diseases. The non-reducing polyketide synthase phnA synthesizes the heptaketide backbone and cyclizes it into the angular, hemiketal-containing naphtho-gamma-pyrone prephenalenone. The product template (PT) domain of phnA catalyzes only the C4-C9 aldol condensation, which is unprecedented among known PT domains. The transformation of prephenalenone to phenalenones requires an FAD-dependent monooxygenase phnB, which catalyzes the C2 aromatic hydroxylation of prephenalenone and ring opening of the gamma-pyrone ring simultaneously. Subsequent intramolecular deprotonation of C3 phenolic oxygen accelerates phenalenone ring closure to yield the tricyclic phenalenone core with a C2 hydroxylation. The prenyltransferase phnF further catalyzes reverse C-prenylation of phenalenone by direct electrophilic substitution at C6, or possibly via first a forward O-prenylation of a neighboring phenol in phenalenone, followed by a Claisen rearrangement. The hydroalkoxylation enzyme phnH catalyzes the 5-exo-trig cyclization via acid catalysis after the spontaneous deprotonation of 7-OH, which leads to the formation of the dihydrobenzofuran atrovenetin. Atrovenetin is further converted to deoxyherqueinone by the O-methyltransferase phnC which can methylate C2-OH to stabilize the northern portion of the phenalenone core. Finally, the oxidoreductase phnG converts deoxyherqueinone to herqueinone via C6 hydroxylation. This Penicillium herquei protein is Hydroalkoxylation enzyme phnH.